A 115-amino-acid chain; its full sequence is Parathyroid hormone (115 aa).

The signal sequence occupies residues 1–25 (MMSAKDMVKVMIVMLAICFLARSDG). The propeptide occupies 26–31 (KSVKKR). Residues 51–69 (RVEWLRKKLQDVHNFVALG) are important for receptor binding. Residues 77-99 (GSSQRPRKKEDNVLVESHQKSLG) are disordered. The span at 84-99 (KKEDNVLVESHQKSLG) shows a compositional bias: basic and acidic residues.

It belongs to the parathyroid hormone family. In terms of assembly, interacts with PTH1R (via N-terminal extracellular domain).

The protein resides in the secreted. In terms of biological role, parathyroid hormone elevates calcium level by dissolving the salts in bone and preventing their renal excretion. Acts by binding to its receptor, PTH1R, activating G protein-coupled receptor signaling. Stimulates [1-14C]-2-deoxy-D-glucose (2DG) transport and glycogen synthesis in osteoblastic cells. This is Parathyroid hormone from Bos taurus (Bovine).